Reading from the N-terminus, the 220-residue chain is Charged multivesicular body protein 2a (220 aa).

Met-1 carries the N-acetylmethionine modification. Coiled-coil stretches lie at residues 12–52 (EELL…KMAK) and 195–220 (RAAE…LRRD). Positions 208 to 218 (ADLEERLKNLR) match the MIT-interacting motif motif.

The protein belongs to the SNF7 family. Probable core component of the endosomal sorting required for transport complex III (ESCRT-III). ESCRT-III components are thought to multimerize to form a flat lattice on the perimeter membrane of the endosome.

The protein resides in the late endosome membrane. Its subcellular location is the cytoplasm. In terms of biological role, probable core component of the endosomal sorting required for transport complex III (ESCRT-III) which is involved in multivesicular bodies (MVBs) formation and sorting of endosomal cargo proteins into MVBs. MVBs contain intraluminal vesicles (ILVs) that are generated by invagination and scission from the limiting membrane of the endosome and mostly are delivered to lysosomes enabling degradation of membrane proteins, such as stimulated growth factor receptors, lysosomal enzymes and lipids. This is Charged multivesicular body protein 2a (CHMP2A) from Gallus gallus (Chicken).